The sequence spans 490 residues: Acetyl-coenzyme A carboxylase carboxyl transferase subunit beta, chloroplastic (490 aa).

Residues 184-203 (LNSSENEGSSRRTRTKGSDL) form a disordered region. The CoA carboxyltransferase N-terminal domain maps to 221-490 (LWVQCENCYG…PLNQKSSKIK (270 aa)). Positions 225, 228, 244, and 247 each coordinate Zn(2+). The C4-type zinc-finger motif lies at 225–247 (CENCYGLNYKKFLKSKMNICEQC).

This sequence belongs to the AccD/PCCB family. As to quaternary structure, acetyl-CoA carboxylase is a heterohexamer composed of biotin carboxyl carrier protein, biotin carboxylase and 2 subunits each of ACCase subunit alpha and ACCase plastid-coded subunit beta (accD). It depends on Zn(2+) as a cofactor. In terms of tissue distribution, RNA expressed in leaf, root, stem, and tuber; the least expression occurs in stems. RNA persists even in senescent leaves.

Its subcellular location is the plastid. It is found in the chloroplast stroma. The enzyme catalyses N(6)-carboxybiotinyl-L-lysyl-[protein] + acetyl-CoA = N(6)-biotinyl-L-lysyl-[protein] + malonyl-CoA. It participates in lipid metabolism; malonyl-CoA biosynthesis; malonyl-CoA from acetyl-CoA: step 1/1. In terms of biological role, component of the acetyl coenzyme A carboxylase (ACC) complex. Biotin carboxylase (BC) catalyzes the carboxylation of biotin on its carrier protein (BCCP) and then the CO(2) group is transferred by the transcarboxylase to acetyl-CoA to form malonyl-CoA. The sequence is that of Acetyl-coenzyme A carboxylase carboxyl transferase subunit beta, chloroplastic from Solanum tuberosum (Potato).